The primary structure comprises 351 residues: AA9 family lytic polysaccharide monooxygenase A (351 aa).

A signal peptide spans 1 to 20; that stretch reads MSNKAATLLAALSGAALVAA. H21 and H107 together coordinate Cu(2+). C76 and C196 are joined by a disulfide. H182 and Q191 together coordinate O2. Y193 is a Cu(2+) binding site. Residues 315 to 351 enclose the CBM1 domain; sequence GVAPKWGQCGGNGWTGPTVCASGSTCTVLNPYYSQCI.

It belongs to the polysaccharide monooxygenase AA9 family. The cofactor is Cu(2+).

It is found in the secreted. It carries out the reaction [(1-&gt;4)-beta-D-glucosyl]n+m + reduced acceptor + O2 = 4-dehydro-beta-D-glucosyl-[(1-&gt;4)-beta-D-glucosyl]n-1 + [(1-&gt;4)-beta-D-glucosyl]m + acceptor + H2O.. Functionally, lytic polysaccharide monooxygenase (LPMO) that depolymerizes crystalline and amorphous polysaccharides via the oxidation of scissile alpha- or beta-(1-4)-glycosidic bonds, yielding C1 and C4 oxidation products. Catalysis by LPMOs requires the reduction of the active-site copper from Cu(II) to Cu(I) by a reducing agent and H(2)O(2) or O(2) as a cosubstrate. The sequence is that of AA9 family lytic polysaccharide monooxygenase A from Podospora anserina (strain S / ATCC MYA-4624 / DSM 980 / FGSC 10383) (Pleurage anserina).